A 233-amino-acid polypeptide reads, in one-letter code: Large ribosomal subunit protein eL6z (233 aa).

The interval 175 to 195 (EFFEAEKEEKKEIPQEKKEDQ) is disordered.

The protein belongs to the eukaryotic ribosomal protein eL6 family.

The protein is Large ribosomal subunit protein eL6z (RPL6A) of Arabidopsis thaliana (Mouse-ear cress).